We begin with the raw amino-acid sequence, 183 residues long: Apo-citrate lyase phosphoribosyl-dephospho-CoA transferase (183 aa).

The protein belongs to the CitX family.

It carries out the reaction apo-[citrate lyase ACP] + 2'-(5''-triphospho-alpha-D-ribosyl)-3'-dephospho-CoA = holo-[citrate lyase ACP] + diphosphate. Its function is as follows. Transfers 2-(5''-triphosphoribosyl)-3'-dephosphocoenzyme-A on a serine residue to the apo-acyl carrier protein (gamma chain) of the citrate lyase to yield holo-acyl carrier protein. The sequence is that of Apo-citrate lyase phosphoribosyl-dephospho-CoA transferase from Citrobacter koseri (strain ATCC BAA-895 / CDC 4225-83 / SGSC4696).